Here is a 21-residue protein sequence, read N- to C-terminus: Nucleoside diphosphate kinase (21 aa).

Catalysis depends on His4, which acts as the Pros-phosphohistidine intermediate.

This sequence belongs to the NDK family. As to quaternary structure, homohexamer. It depends on Mg(2+) as a cofactor.

It localises to the cytoplasm. It catalyses the reaction a 2'-deoxyribonucleoside 5'-diphosphate + ATP = a 2'-deoxyribonucleoside 5'-triphosphate + ADP. The catalysed reaction is a ribonucleoside 5'-diphosphate + ATP = a ribonucleoside 5'-triphosphate + ADP. Major role in the synthesis of nucleoside triphosphates other than ATP. The ATP gamma phosphate is transferred to the NDP beta phosphate via a ping-pong mechanism, using a phosphorylated active-site intermediate. This chain is Nucleoside diphosphate kinase (NDK1), found in Candida albicans (Yeast).